A 181-amino-acid chain; its full sequence is ATP-dependent protease subunit HslV (181 aa).

Thr-11 is a catalytic residue. The Na(+) site is built by Ala-166, Cys-169, and Thr-172.

This sequence belongs to the peptidase T1B family. HslV subfamily. A double ring-shaped homohexamer of HslV is capped on each side by a ring-shaped HslU homohexamer. The assembly of the HslU/HslV complex is dependent on binding of ATP.

Its subcellular location is the cytoplasm. It carries out the reaction ATP-dependent cleavage of peptide bonds with broad specificity.. With respect to regulation, allosterically activated by HslU binding. Functionally, protease subunit of a proteasome-like degradation complex believed to be a general protein degrading machinery. The sequence is that of ATP-dependent protease subunit HslV from Chlorobaculum tepidum (strain ATCC 49652 / DSM 12025 / NBRC 103806 / TLS) (Chlorobium tepidum).